A 784-amino-acid chain; its full sequence is Probable phosphoketolase (784 aa).

Belongs to the XFP family. The cofactor is thiamine diphosphate.

The sequence is that of Probable phosphoketolase from Rhodopseudomonas palustris (strain BisB5).